The primary structure comprises 334 residues: Heat-inducible transcription repressor HrcA (334 aa).

Belongs to the HrcA family.

Its function is as follows. Negative regulator of class I heat shock genes (grpE-dnaK-dnaJ and groELS operons). Prevents heat-shock induction of these operons. In Acidovorax ebreus (strain TPSY) (Diaphorobacter sp. (strain TPSY)), this protein is Heat-inducible transcription repressor HrcA.